The chain runs to 131 residues: Large ribosomal subunit protein bL17 (131 aa).

Belongs to the bacterial ribosomal protein bL17 family. In terms of assembly, part of the 50S ribosomal subunit. Contacts protein L32.

This chain is Large ribosomal subunit protein bL17, found in Cupriavidus pinatubonensis (strain JMP 134 / LMG 1197) (Cupriavidus necator (strain JMP 134)).